The chain runs to 389 residues: tRNA-specific 2-thiouridylase MnmA (389 aa).

Residues 35–42 (GMSGGVDS) and M61 each bind ATP. The interaction with target base in tRNA stretch occupies residues 121-123 (NPD). The Nucleophile role is filled by C126. A disulfide bridge connects residues C126 and C223. G151 is an ATP binding site. Residues 173 to 175 (KDQ) are interaction with tRNA. C223 acts as the Cysteine persulfide intermediate in catalysis. Residues 335 to 336 (RY) form an interaction with tRNA region.

It belongs to the MnmA/TRMU family.

The protein localises to the cytoplasm. It catalyses the reaction S-sulfanyl-L-cysteinyl-[protein] + uridine(34) in tRNA + AH2 + ATP = 2-thiouridine(34) in tRNA + L-cysteinyl-[protein] + A + AMP + diphosphate + H(+). In terms of biological role, catalyzes the 2-thiolation of uridine at the wobble position (U34) of tRNA, leading to the formation of s(2)U34. The sequence is that of tRNA-specific 2-thiouridylase MnmA from Mannheimia succiniciproducens (strain KCTC 0769BP / MBEL55E).